Reading from the N-terminus, the 235-residue chain is 7-cyano-7-deazaguanine synthase (235 aa).

Position 16-26 (16-26) interacts with ATP; the sequence is FSGGQDSTTCL. Zn(2+) contacts are provided by cysteine 195, cysteine 204, cysteine 207, and cysteine 210.

Belongs to the QueC family. Zn(2+) is required as a cofactor.

It catalyses the reaction 7-carboxy-7-deazaguanine + NH4(+) + ATP = 7-cyano-7-deazaguanine + ADP + phosphate + H2O + H(+). It functions in the pathway purine metabolism; 7-cyano-7-deazaguanine biosynthesis. Functionally, catalyzes the ATP-dependent conversion of 7-carboxy-7-deazaguanine (CDG) to 7-cyano-7-deazaguanine (preQ(0)). This chain is 7-cyano-7-deazaguanine synthase, found in Shewanella frigidimarina (strain NCIMB 400).